Consider the following 230-residue polypeptide: Ribonuclease 3 (230 aa).

Residues 5–125 (YSRFYNILGY…VIGAIYLDSD (121 aa)) form the RNase III domain. Mg(2+) is bound at residue glutamate 40. The active site involves aspartate 44. Mg(2+) is bound by residues aspartate 111 and glutamate 114. Residue glutamate 114 is part of the active site. A DRBM domain is found at 153–223 (DSKSKLQEIL…AEKMIEMLSQ (71 aa)).

Belongs to the ribonuclease III family. In terms of assembly, homodimer. Requires Mg(2+) as cofactor.

Its subcellular location is the cytoplasm. It carries out the reaction Endonucleolytic cleavage to 5'-phosphomonoester.. Functionally, digests double-stranded RNA. Involved in the processing of primary rRNA transcript to yield the immediate precursors to the large and small rRNAs (23S and 16S). Processes some mRNAs, and tRNAs when they are encoded in the rRNA operon. Processes pre-crRNA and tracrRNA of type II CRISPR loci if present in the organism. In Francisella tularensis subsp. holarctica (strain FTNF002-00 / FTA), this protein is Ribonuclease 3.